Reading from the N-terminus, the 530-residue chain is Bifunctional purine biosynthesis protein PurH (530 aa).

Positions 2-150 (TDHPRRVTRA…KNHDDVAVVV (149 aa)) constitute an MGS-like domain.

The protein belongs to the PurH family.

It carries out the reaction (6R)-10-formyltetrahydrofolate + 5-amino-1-(5-phospho-beta-D-ribosyl)imidazole-4-carboxamide = 5-formamido-1-(5-phospho-D-ribosyl)imidazole-4-carboxamide + (6S)-5,6,7,8-tetrahydrofolate. The enzyme catalyses IMP + H2O = 5-formamido-1-(5-phospho-D-ribosyl)imidazole-4-carboxamide. It participates in purine metabolism; IMP biosynthesis via de novo pathway; 5-formamido-1-(5-phospho-D-ribosyl)imidazole-4-carboxamide from 5-amino-1-(5-phospho-D-ribosyl)imidazole-4-carboxamide (10-formyl THF route): step 1/1. Its pathway is purine metabolism; IMP biosynthesis via de novo pathway; IMP from 5-formamido-1-(5-phospho-D-ribosyl)imidazole-4-carboxamide: step 1/1. The polypeptide is Bifunctional purine biosynthesis protein PurH (Bradyrhizobium diazoefficiens (strain JCM 10833 / BCRC 13528 / IAM 13628 / NBRC 14792 / USDA 110)).